A 92-amino-acid polypeptide reads, in one-letter code: Small ribosomal subunit protein bS20 (92 aa).

Positions 1–25 are disordered; it reads MANSAQARKRARQAAKANSHNSALR.

This sequence belongs to the bacterial ribosomal protein bS20 family.

Functionally, binds directly to 16S ribosomal RNA. The polypeptide is Small ribosomal subunit protein bS20 (Paraburkholderia phytofirmans (strain DSM 17436 / LMG 22146 / PsJN) (Burkholderia phytofirmans)).